A 327-amino-acid polypeptide reads, in one-letter code: Methionyl-tRNA formyltransferase (327 aa).

Position 121–124 (121–124 (SLLP)) interacts with (6S)-5,6,7,8-tetrahydrofolate.

It belongs to the Fmt family.

The enzyme catalyses L-methionyl-tRNA(fMet) + (6R)-10-formyltetrahydrofolate = N-formyl-L-methionyl-tRNA(fMet) + (6S)-5,6,7,8-tetrahydrofolate + H(+). Its function is as follows. Attaches a formyl group to the free amino group of methionyl-tRNA(fMet). The formyl group appears to play a dual role in the initiator identity of N-formylmethionyl-tRNA by promoting its recognition by IF2 and preventing the misappropriation of this tRNA by the elongation apparatus. This chain is Methionyl-tRNA formyltransferase, found in Burkholderia multivorans (strain ATCC 17616 / 249).